A 147-amino-acid polypeptide reads, in one-letter code: Hemoglobin subunit epsilon (147 aa).

The 145-residue stretch at 3–147 (HFTAEEKAAI…VAIALGHKYH (145 aa)) folds into the Globin domain. Ser-14 and Ser-51 each carry phosphoserine. Heme b-binding residues include His-64 and His-93.

Belongs to the globin family. As to quaternary structure, heterotetramer of two alpha chains and two epsilon chains in early embryonic hemoglobin Gower-2; two zeta chains and two epsilon chains in early embryonic hemoglobin Gower-1. Red blood cells.

The epsilon chain is a beta-type chain of early mammalian embryonic hemoglobin. This is Hemoglobin subunit epsilon (HBE1) from Pithecia irrorata (Gray monk saki).